The primary structure comprises 112 residues: UPF0060 membrane protein Arth_4238 (112 aa).

4 consecutive transmembrane segments (helical) span residues 7 to 27, 33 to 53, 62 to 82, and 88 to 108; these read ILLF…VWQA, EWWW…AATL, ILAA…MVFD, and RWDI…MFAP.

It belongs to the UPF0060 family.

It localises to the cell membrane. The protein is UPF0060 membrane protein Arth_4238 of Arthrobacter sp. (strain FB24).